The primary structure comprises 199 residues: Cytochrome c oxidase assembly protein CtaG (199 aa).

Residues Met1 to Arg12 lie on the Cytoplasmic side of the membrane. A helical; Signal-anchor for type II membrane protein transmembrane segment spans residues Ala13–Ala35. Topologically, residues Val36–Leu199 are periplasmic.

This sequence belongs to the COX11/CtaG family.

The protein resides in the cell inner membrane. Functionally, exerts its effect at some terminal stage of cytochrome c oxidase synthesis, probably by being involved in the insertion of the copper B into subunit I. This Sinorhizobium fredii (strain NBRC 101917 / NGR234) protein is Cytochrome c oxidase assembly protein CtaG.